The following is a 242-amino-acid chain: N-glycosylase/DNA lyase (242 aa).

Positions 26, 53, and 64 each coordinate 8-oxoguanine. A helix-hairpin-helix region spans residues 120–184 (EGYYKNMKML…EDLRIKSVTS (65 aa)). K144 acts as the Schiff-base intermediate with DNA in catalysis. F148 and P174 together coordinate 8-oxoguanine. The active site involves D176. 8-oxoguanine contacts are provided by D210 and W214.

This sequence belongs to the archaeal N-glycosylase/DNA lyase (AGOG) family.

The enzyme catalyses 2'-deoxyribonucleotide-(2'-deoxyribose 5'-phosphate)-2'-deoxyribonucleotide-DNA = a 3'-end 2'-deoxyribonucleotide-(2,3-dehydro-2,3-deoxyribose 5'-phosphate)-DNA + a 5'-end 5'-phospho-2'-deoxyribonucleoside-DNA + H(+). In terms of biological role, DNA repair enzyme that is part of the base excision repair (BER) pathway; protects from oxidative damage by removing the major product of DNA oxidation, 8-oxoguanine (GO), from single- and double-stranded DNA substrates. The sequence is that of N-glycosylase/DNA lyase from Pyrococcus furiosus (strain ATCC 43587 / DSM 3638 / JCM 8422 / Vc1).